The primary structure comprises 262 residues: Merozoite surface protein 2 (262 aa).

An N-terminal signal peptide occupies residues 1–20 (MKVIKTLSIINFFIFVTFNI). Residues Asn22 and Asn36 are each glycosylated (N-linked (GlcNAc...) asparagine). Residues 44 to 188 (AESKPPTGTG…EQTESPELQS (145 aa)) are polymorphic region. The disordered stretch occupies residues 44–223 (AESKPPTGTG…DSQKECTDGN (180 aa)). Gly residues predominate over residues 51-66 (GTGGSGSAGSGAGASA). A compositionally biased stretch (low complexity) spans 67–111 (GNGANPGADAERSPSTPATPATPATTTTTTTTNDAEASTSTSSEN). Over residues 112-127 (PNHKNAETNPKGKGEV) the composition is skewed to basic and acidic residues. Polar residues-rich tracts occupy residues 129-155 (KPNQ…NVPP) and 162-190 (KSPT…QSAP). Residue Asn139 is glycosylated (N-linked (GlcNAc...) asparagine). N-linked (GlcNAc...) asparagine glycosylation is present at Asn211. A disulfide bridge connects residues Cys219 and Cys227. Asn235 and Asn236 each carry an N-linked (GlcNAc...) asparagine glycan. The GPI-anchor amidated asparagine moiety is linked to residue Asn236. The propeptide at 237 to 262 (SSNIASINKFVVLISATLVLSFAIFI) is removed in mature form.

The protein resides in the cell membrane. May play a role in the merozoite attachment to the erythrocyte. This Plasmodium falciparum (isolate Camp / Malaysia) protein is Merozoite surface protein 2.